The sequence spans 442 residues: MSYHNPYTPPRKSATFDDYTLAEIRRAAATGIYDIRGAGTKRKVPHFDDLLFLGASISRYPLEGYREKCDTSVVLGTRFAKKPIHLKIPITIAGMSFGALSGPAKEALGRGATASGTSTTTGDGGMTDEERGHSQTLVYQYLPSRYGMNPKDLRRADAIEVVVGQGAKPGGGGMLLGQKISDRVANMRNLPKGIDQRSACRHPDWTGPDDLEIKILELREITDWEKPIYVKVGGARPYYDTALAVKAGADVVVLDGMQGGTAATQDVFIENVGMPTLACIRPAVQALQDLGMHRKVQLVVSGGIRSGADVAKALALGADAVAIGTAALVAIGDNDPHWEEEYQKLGTTAGAYDDWHEGKDPAGITTQDPELMKRLDPVAAGRRLANYLKVMTLEAQTIARACGKNHLHNLEPEDLCALTMEAAAMAQVPLAGTSWYPGKGTF.

A disordered region spans residues 108–133; it reads LGRGATASGTSTTTGDGGMTDEERGH. A compositionally biased stretch (low complexity) spans 109 to 121; that stretch reads GRGATASGTSTTT.

The protein belongs to the glutamate synthase family.

The polypeptide is Glutamate synthase large subunit-like protein (glxD) (Rhizobium meliloti (strain 1021) (Ensifer meliloti)).